We begin with the raw amino-acid sequence, 444 residues long: MREIVHIQAGQCGNQIGAKFWEVISDEHGIDPTGTYHGDSDLQLDRISVYYNEATGGKYVPRAILVDLEPGTMDSVRSGPFGQIFRPDNFVFGQSGAGNNWAKGHYTEGAELVDSVLDVVRKEAESCDCLQGFQLTHSLGGGTGSGMGTLLISKIREEYPDRIMNTFSVVPSPKVSDTVVEPYNATLSVHQLVENTDETYCIDNEALYDICFRTLKLTTPTYGDLNHLVSATMSGVTTCLRFPGQLNADLRKLAVNMVPFPRLHFFMPGFAPLTSRGSQQYRALTVPELTQQVFDAKNMMAACDPRHGRYLTVAAVFRGRMSMKEVDEQMLNVQNKNSSYFVEWIPNNVKTAVCDIPPRGLKMAVTFIGNSTAIQELFKRISEQFTAMFRRKAFLHWYTGEGMDEMEFTEAESNMNDLVSEYQQYQDATAEEEEDFNEEAEEEA.

The MREI motif signature appears at 1–4 (MREI). 8 residues coordinate GTP: glutamine 11, glutamate 69, serine 138, glycine 142, threonine 143, glycine 144, asparagine 204, and asparagine 226. Residue glutamate 69 participates in Mg(2+) binding. The tract at residues 421–444 (EYQQYQDATAEEEEDFNEEAEEEA) is disordered. Residues 429 to 444 (TAEEEEDFNEEAEEEA) are compositionally biased toward acidic residues. 5-glutamyl polyglutamate is present on glutamate 438.

The protein belongs to the tubulin family. Dimer of alpha and beta chains. A typical microtubule is a hollow water-filled tube with an outer diameter of 25 nm and an inner diameter of 15 nM. Alpha-beta heterodimers associate head-to-tail to form protofilaments running lengthwise along the microtubule wall with the beta-tubulin subunit facing the microtubule plus end conferring a structural polarity. Microtubules usually have 13 protofilaments but different protofilament numbers can be found in some organisms and specialized cells. Requires Mg(2+) as cofactor. In terms of processing, some glutamate residues at the C-terminus are polyglycylated, resulting in polyglycine chains on the gamma-carboxyl group. Glycylation is mainly limited to tubulin incorporated into axonemes (cilia and flagella) whereas glutamylation is prevalent in neuronal cells, centrioles, axonemes, and the mitotic spindle. Both modifications can coexist on the same protein on adjacent residues, and lowering polyglycylation levels increases polyglutamylation, and reciprocally. The precise function of polyglycylation is still unclear. Some glutamate residues at the C-terminus are polyglutamylated, resulting in polyglutamate chains on the gamma-carboxyl group. Polyglutamylation plays a key role in microtubule severing by spastin (SPAST). SPAST preferentially recognizes and acts on microtubules decorated with short polyglutamate tails: severing activity by SPAST increases as the number of glutamates per tubulin rises from one to eight, but decreases beyond this glutamylation threshold.

Its subcellular location is the cytoplasm. The protein resides in the cytoskeleton. Its function is as follows. Tubulin is the major constituent of microtubules, a cylinder consisting of laterally associated linear protofilaments composed of alpha- and beta-tubulin heterodimers. Microtubules grow by the addition of GTP-tubulin dimers to the microtubule end, where a stabilizing cap forms. Below the cap, tubulin dimers are in GDP-bound state, owing to GTPase activity of alpha-tubulin. This chain is Tubulin beta chain (tubb), found in Xenopus laevis (African clawed frog).